A 180-amino-acid polypeptide reads, in one-letter code: Adenine phosphoribosyltransferase (180 aa).

N-acetylalanine is present on Ala-2. Phosphoserine occurs at positions 15 and 30. At Tyr-60 the chain carries Phosphotyrosine. Ser-66 is subject to Phosphoserine. Thr-135 carries the post-translational modification Phosphothreonine.

Belongs to the purine/pyrimidine phosphoribosyltransferase family. In terms of assembly, homodimer.

It localises to the cytoplasm. The catalysed reaction is AMP + diphosphate = 5-phospho-alpha-D-ribose 1-diphosphate + adenine. Its pathway is purine metabolism; AMP biosynthesis via salvage pathway; AMP from adenine: step 1/1. In terms of biological role, catalyzes a salvage reaction resulting in the formation of AMP, that is energically less costly than de novo synthesis. The sequence is that of Adenine phosphoribosyltransferase from Bos taurus (Bovine).